Consider the following 232-residue polypeptide: 5'-methylthioadenosine/S-adenosylhomocysteine nucleosidase (232 aa).

The active-site Proton acceptor is glutamate 14. Substrate contacts are provided by residues glycine 80, valine 154, and 175-176 (ME). Aspartate 199 (proton donor) is an active-site residue.

The protein belongs to the PNP/UDP phosphorylase family. MtnN subfamily.

The catalysed reaction is S-adenosyl-L-homocysteine + H2O = S-(5-deoxy-D-ribos-5-yl)-L-homocysteine + adenine. It catalyses the reaction S-methyl-5'-thioadenosine + H2O = 5-(methylsulfanyl)-D-ribose + adenine. It carries out the reaction 5'-deoxyadenosine + H2O = 5-deoxy-D-ribose + adenine. The protein operates within amino-acid biosynthesis; L-methionine biosynthesis via salvage pathway; S-methyl-5-thio-alpha-D-ribose 1-phosphate from S-methyl-5'-thioadenosine (hydrolase route): step 1/2. Functionally, catalyzes the irreversible cleavage of the glycosidic bond in both 5'-methylthioadenosine (MTA) and S-adenosylhomocysteine (SAH/AdoHcy) to adenine and the corresponding thioribose, 5'-methylthioribose and S-ribosylhomocysteine, respectively. Also cleaves 5'-deoxyadenosine, a toxic by-product of radical S-adenosylmethionine (SAM) enzymes, into 5-deoxyribose and adenine. The chain is 5'-methylthioadenosine/S-adenosylhomocysteine nucleosidase from Haemophilus ducreyi (strain 35000HP / ATCC 700724).